The following is a 395-amino-acid chain: Inactive serine protease 54 (395 aa).

Residues 1 to 30 (MVSAAGLSGDGKMRGVLLVLLGLLYSSTSC) form the signal peptide. Residues 37–269 (VFYGPDPKEG…YSKWITSKAE (233 aa)) form the Peptidase S1 domain. N-linked (GlcNAc...) asparagine glycosylation occurs at Asn-123. 3 disulfide bridges follow: Cys-164–Cys-227, Cys-195–Cys-205, and Cys-217–Cys-248. The tract at residues 324–348 (RLGNSSRDSLDVREKDVKESGRSPE) is disordered. N-linked (GlcNAc...) asparagine glycosylation is present at Asn-327. Residues 331–345 (DSLDVREKDVKESGR) are compositionally biased toward basic and acidic residues.

Belongs to the peptidase S1 family. Plasma kallikrein subfamily.

Its subcellular location is the secreted. The protein is Inactive serine protease 54 (PRSS54) of Homo sapiens (Human).